Reading from the N-terminus, the 370-residue chain is Dual-specificity RNA methyltransferase RlmN (370 aa).

Glu97 acts as the Proton acceptor in catalysis. A Radical SAM core domain is found at 103–340 (EKSRGTLCIS…CTVRRTRGDD (238 aa)). Residues Cys110 and Cys345 are joined by a disulfide bond. Cys117, Cys121, and Cys124 together coordinate [4Fe-4S] cluster. Residues 170–171 (GE), Ser202, 224–226 (SLH), and Asn302 each bind S-adenosyl-L-methionine. The S-methylcysteine intermediate role is filled by Cys345.

The protein belongs to the radical SAM superfamily. RlmN family. The cofactor is [4Fe-4S] cluster.

It is found in the cytoplasm. The enzyme catalyses adenosine(2503) in 23S rRNA + 2 reduced [2Fe-2S]-[ferredoxin] + 2 S-adenosyl-L-methionine = 2-methyladenosine(2503) in 23S rRNA + 5'-deoxyadenosine + L-methionine + 2 oxidized [2Fe-2S]-[ferredoxin] + S-adenosyl-L-homocysteine. It catalyses the reaction adenosine(37) in tRNA + 2 reduced [2Fe-2S]-[ferredoxin] + 2 S-adenosyl-L-methionine = 2-methyladenosine(37) in tRNA + 5'-deoxyadenosine + L-methionine + 2 oxidized [2Fe-2S]-[ferredoxin] + S-adenosyl-L-homocysteine. In terms of biological role, specifically methylates position 2 of adenine 2503 in 23S rRNA and position 2 of adenine 37 in tRNAs. m2A2503 modification seems to play a crucial role in the proofreading step occurring at the peptidyl transferase center and thus would serve to optimize ribosomal fidelity. In Hydrogenovibrio crunogenus (strain DSM 25203 / XCL-2) (Thiomicrospira crunogena), this protein is Dual-specificity RNA methyltransferase RlmN.